A 29-amino-acid polypeptide reads, in one-letter code: Cycloviolacin-H2 (29 aa).

The segment at residues 1–29 is a cross-link (cyclopeptide (Ser-Asn)); that stretch reads SAIACGESCVYIPCFIPGCSCRNRVCYLN. Disulfide bonds link Cys5–Cys19, Cys9–Cys21, and Cys14–Cys26.

In terms of processing, this is a cyclic peptide.

Probably participates in a plant defense mechanism. This is Cycloviolacin-H2 from Viola hederacea (Australian violet).